A 260-amino-acid polypeptide reads, in one-letter code: POLG alternative reading frame (260 aa).

2 disordered regions span residues 1–50 (MEPK…LRPR) and 108–219 (ARRG…RRGG). Composition is skewed to low complexity over residues 36–48 (AGSS…LQLR), 116–154 (GRGA…GQPG), and 164–186 (AEPA…EAPG). The required for nucleolar localization stretch occupies residues 104–130 (ANLRARRGDAWRGRGAPQRRAPAEARA). 2 stretches are compositionally biased toward gly residues: residues 187-199 (LGLG…VRPR) and 209-219 (RGAGPGVRRGG).

As to quaternary structure, interacts with C1QBP; the interaction results in nucleolar localization of C1QBP, probably due to prevention of C1QBP maturation and redirection from mitochondria to nucleoli. In terms of processing, undergoes proteolytic cleavage to produce a secreted C-terminal fragment.

It is found in the nucleus. Its subcellular location is the nucleolus. It localises to the secreted. This Homo sapiens (Human) protein is POLG alternative reading frame.